A 649-amino-acid polypeptide reads, in one-letter code: Leucine-rich repeat transmembrane protein FLRT3 (649 aa).

The signal sequence occupies residues 1-28 (MISPAWSIFLIGTKIGLFLQVAPLSVMA). The LRRNT domain maps to 29–58 (KSCPSVCRCDAGFIYCNDRFLTSIPTGIPE). Residues 29 to 528 (KSCPSVCRCD…KEPYKNPNLP (500 aa)) lie on the Extracellular side of the membrane. Disulfide bonds link cysteine 31-cysteine 37 and cysteine 35-cysteine 44. The segment at 38-67 (DAGFIYCNDRFLTSIPTGIPEDATTLYLQN) is interaction with ADGRL3. 10 LRR repeats span residues 59–80 (DATT…SDLK), 84–104 (KVER…NLPK), 105–126 (YVKE…SLSK), 129–150 (YLEE…EGAF), 155–176 (YLRL…LPRT), 177–197 (IEEL…SLQG), 200–220 (SLKR…GDKV), 226–247 (NLTE…LPGT), 248–269 (NLRK…AFSY), and 272–293 (QLYR…IFDD). Residue asparagine 226 is glycosylated (N-linked (GlcNAc...) asparagine). N-linked (GlcNAc...) asparagine glycans are attached at residues asparagine 282 and asparagine 296. The LRRCT domain maps to 305–357 (NPWYCGCKMKWVRDWLQSLPVKVNVRGLMCQAPEKVRGMAIKDLNAELFDCKD). An intrachain disulfide couples cysteine 309 to cysteine 334. Positions 385-407 (VTKQPDIKNPKLTKDHQTTGSPS) are disordered. Positions 389–401 (PDIKNPKLTKDHQ) are enriched in basic and acidic residues. Positions 409 to 504 (KTITITVKSV…VCIETETAPL (96 aa)) constitute a Fibronectin type-III domain. Residues 529 to 549 (LAAIIGGAVALVTIALLALVC) form a helical membrane-spanning segment. Residues 550–649 (WYVHRNGSLF…GIPDSDHSHS (100 aa)) lie on the Cytoplasmic side of the membrane. The interval 622–649 (LYKNNHSESSSNRSYRDSGIPDSDHSHS) is disordered.

Monomer and homodimer. Self-associates (via leucine-rich repeats), giving rise to homooligomers. Interacts with FGFR1. Interacts (via extracellular domain) with ADGRL1/LPHN1 and LPHN2 (via olfactomedin-like domain). Interacts (via extracellular domain) with ADGRL3 (via olfactomedin-like domain); the interaction is direct. Interacts (via extracellular domain) with UNC5B and UNC5D (via extracellular domain); the interaction is direct. Identified in complexes composed of FLRT3, ADGRL3 and UNC5B, respectively FLRT3, ADGRL3 and UNC5D. May also interact (via extracellular domain) with UNC5A and UNC5C. Interacts (via cytoplasmic domain) with ROBO1. In terms of processing, N-glycosylated. Post-translationally, proteolytic cleavage in the juxtamembrane region gives rise to a soluble ectodomain. Cleavage is probably effected by a metalloprotease.

The protein resides in the cell membrane. The protein localises to the presynaptic cell membrane. Its subcellular location is the endoplasmic reticulum membrane. It is found in the cell junction. It localises to the focal adhesion. The protein resides in the secreted. The protein localises to the cell projection. Its subcellular location is the axon. It is found in the growth cone membrane. Functionally, functions in cell-cell adhesion, cell migration and axon guidance, exerting an attractive or repulsive role depending on its interaction partners. Plays a role in the spatial organization of brain neurons. Plays a role in vascular development in the retina. Plays a role in cell-cell adhesion via its interaction with ADGRL3 and probably also other latrophilins that are expressed at the surface of adjacent cells. Interaction with the intracellular domain of ROBO1 mediates axon attraction towards cells expressing NTN1. Mediates axon growth cone collapse and plays a repulsive role in neuron guidance via its interaction with UNC5B, and possibly also other UNC-5 family members. Promotes neurite outgrowth (in vitro). Mediates cell-cell contacts that promote an increase both in neurite number and in neurite length. Plays a role in the regulation of the density of glutamaergic synapses. Plays a role in fibroblast growth factor-mediated signaling cascades. Required for normal morphogenesis during embryonic development, but not for normal embryonic patterning. Required for normal ventral closure, headfold fusion and definitive endoderm migration during embryonic development. Required for the formation of a normal basement membrane and the maintenance of a normal anterior visceral endoderm during embryonic development. The polypeptide is Leucine-rich repeat transmembrane protein FLRT3 (FLRT3) (Pongo abelii (Sumatran orangutan)).